We begin with the raw amino-acid sequence, 529 residues long: MGPSCPVFLSFTKLSLWWLLLTPAGGEEAKRPPPRAPGDPLSSPSPTALPQGGSHTETEDRLFKHLFRGYNRWARPVPNTSDVVIVRFGLSIAQLIDVDEKNQMMTTNVWLKQEWSDYKLRWNPADFGNITSLRVPSEMIWIPDIVLYNNADGEFAVTHMTKAHLFSTGTVHWVPPAIYKSSCSIDVTFFPFDQQNCKMKFGSWTYDKAKIDLEQMEQTVDLKDYWESGEWAIVNATGTYNSKKYDCCAEIYPDVTYAFIIRRLPLFYTINLIIPCLLISCLTVLVFYLPSNCGEKITLCISVLLSLTVFLLLITEIIPSTSLVIPLIGEYLLFTMIFVTLSIVITVFVLNVHHRSPSTHTMPHWVRGTLLGCVPRWLLMNRPPPPLELCHPLHLKLSPSYHWLESNVDAEEREVVVEEEDRWACAGHVAPSVGTLCSHGHLHSGASGPKAEALLQEGELLLSPHMQKALEGVHYIADHLRSEDADSSVKEDWKYVAMVIDRIFLWLFIIVCFLGTIGLFLPPFLAGMI.

An N-terminal signal peptide occupies residues 1-26; that stretch reads MGPSCPVFLSFTKLSLWWLLLTPAGG. A disordered region spans residues 27-56; it reads EEAKRPPPRAPGDPLSSPSPTALPQGGSHT. Topologically, residues 27 to 264 are extracellular; sequence EEAKRPPPRA…VTYAFIIRRL (238 aa). Asn-79 and Asn-129 each carry an N-linked (GlcNAc...) asparagine glycan. Cys-183 and Cys-197 are disulfide-bonded. An N-linked (GlcNAc...) asparagine glycan is attached at Asn-235. Cys-247 and Cys-248 are disulfide-bonded. A run of 3 helical transmembrane segments spans residues 265–289, 297–315, and 331–352; these read PLFY…VFYL, ITLC…LLIT, and YLLF…VLNV. Residues 353-502 are Cytoplasmic-facing; the sequence is HHRSPSTHTM…WKYVAMVIDR (150 aa). A helical membrane pass occupies residues 503-521; the sequence is IFLWLFIIVCFLGTIGLFL.

This sequence belongs to the ligand-gated ion channel (TC 1.A.9) family. Acetylcholine receptor (TC 1.A.9.1) subfamily. Alpha-2/CHRNA2 sub-subfamily. Neuronal AChR is composed of two different types of subunits: alpha and non-alpha (beta). CHRNA2/alpha-2 subunit can be combined to CHRNB2/beta-2 or CHRNB4/beta-4 to give rise to functional receptors. Both CHRNA2:CHRNB2 and CHRNA2:CHRNB4 nAChR complexes are heteropentamers with two subtypes: LS (low agonist sensitivity) with a (CHRNA2)3:(CHRNB2/4)2 and HS (high agonist sensitivity) with a (CHRNA2)2:(CHRNB2/4)3 stoichiometries; the subtypes differ in their subunit binding interfaces which are involved in ligand binding.

The protein localises to the synaptic cell membrane. It is found in the cell membrane. It carries out the reaction Ca(2+)(in) = Ca(2+)(out). The catalysed reaction is K(+)(in) = K(+)(out). The enzyme catalyses Na(+)(in) = Na(+)(out). Component of neuronal acetylcholine receptors (nAChRs) that function as pentameric, ligand-gated cation channels with high calcium permeability among other activities. nAChRs are excitatory neurotrasnmitter receptors formed by a collection of nAChR subunits known to mediate synaptic transmission in the nervous system and the neuromuscular junction. Each nAchR subunit confers differential attributes to channel properties, including activation, deactivation and desensitization kinetics, pH sensitivity, cation permeability, and binding to allosteric modulators. CHRNA2 forms heteropentameric neuronal acetylcholine receptors with CHRNB2 and CHRNB4 and plays a role in nicotine dependence. This chain is Neuronal acetylcholine receptor subunit alpha-2 (CHRNA2), found in Pan troglodytes (Chimpanzee).